The sequence spans 268 residues: MIQITVIQIDNYGPWTVTPNPRRESDLQALQSRLYADLNLMFGAHKGLVFYTRFDNLIAITNGIDLITHKRIQESIRNRYPFTVSMVIASAETPYEAQKLATETLQEYGSAQDENRKEVLDVANELVVDGYVQIAHIDINNITGTLTDIVSAYDTYLNVNKVKLALMEELLKYNALLFFIGGDNFMAPSNGMSEEDFLDIFNRINKKYKIELKAGIGIGRTAEDASNLADIGLEKIRGKLVDKNVCTLKQDDFLESKMGMGKIYHPQF.

This sequence belongs to the archaeal-type GTP cyclohydrolase family. In terms of assembly, homotrimer. Requires Mg(2+) as cofactor.

It catalyses the reaction GTP + 3 H2O = 2-amino-5-formylamino-6-(5-phospho-D-ribosylamino)pyrimidin-4(3H)-one + 2 phosphate + 2 H(+). Catalyzes the formation of 2-amino-5-formylamino-6-ribofuranosylamino-4(3H)-pyrimidinone ribonucleotide monophosphate and inorganic phosphate from GTP. Also has an independent pyrophosphate phosphohydrolase activity. The polypeptide is GTP cyclohydrolase III (gch3) (Methanocaldococcus jannaschii (strain ATCC 43067 / DSM 2661 / JAL-1 / JCM 10045 / NBRC 100440) (Methanococcus jannaschii)).